A 32-amino-acid polypeptide reads, in one-letter code: MSDIN-like toxin proprotein 1 (32 aa).

The propeptide occupies 1–10 (MSDINATCLP). The cyclopeptide (Ala-Pro) cross-link spans 11–17 (AWLALCP). A propeptide spanning residues 18-32 (CVGDDVNPTLTRGGT) is cleaved from the precursor.

The protein belongs to the MSDIN fungal toxin family. Processed by the macrocyclase-peptidase enzyme POPB to yield a toxic cyclic heptapeptide. POPB first removes 10 residues from the N-terminus. Conformational trapping of the remaining peptide forces the enzyme to release this intermediate rather than proceed to macrocyclization. The enzyme rebinds the remaining peptide in a different conformation and catalyzes macrocyclization of the N-terminal 7 residues.

Its function is as follows. Probable toxin that belongs to the MSDIN-like toxin family responsible for a large number of food poisoning cases and deaths. The chain is MSDIN-like toxin proprotein 1 from Amanita fuligineoides.